Consider the following 229-residue polypeptide: 2,3-bisphosphoglycerate-dependent phosphoglycerate mutase (229 aa).

Substrate is bound by residues 7 to 14, 20 to 21, arginine 59, 86 to 89, lysine 97, 113 to 114, and 182 to 183; these read RHGQSEWN, TG, ERHY, RR, and GN. The Tele-phosphohistidine intermediate role is filled by histidine 8. Catalysis depends on glutamate 86, which acts as the Proton donor/acceptor.

Belongs to the phosphoglycerate mutase family. BPG-dependent PGAM subfamily.

The catalysed reaction is (2R)-2-phosphoglycerate = (2R)-3-phosphoglycerate. It participates in carbohydrate degradation; glycolysis; pyruvate from D-glyceraldehyde 3-phosphate: step 3/5. Catalyzes the interconversion of 2-phosphoglycerate and 3-phosphoglycerate. The chain is 2,3-bisphosphoglycerate-dependent phosphoglycerate mutase from Listeria innocua serovar 6a (strain ATCC BAA-680 / CLIP 11262).